A 200-amino-acid polypeptide reads, in one-letter code: 3-isopropylmalate dehydratase small subunit (200 aa).

The protein belongs to the LeuD family. LeuD type 1 subfamily. Heterodimer of LeuC and LeuD.

The enzyme catalyses (2R,3S)-3-isopropylmalate = (2S)-2-isopropylmalate. The protein operates within amino-acid biosynthesis; L-leucine biosynthesis; L-leucine from 3-methyl-2-oxobutanoate: step 2/4. Catalyzes the isomerization between 2-isopropylmalate and 3-isopropylmalate, via the formation of 2-isopropylmaleate. The chain is 3-isopropylmalate dehydratase small subunit from Vibrio vulnificus (strain CMCP6).